We begin with the raw amino-acid sequence, 534 residues long: Glycolytic genes transcriptional activator GCR2 (534 aa).

Residues 29-122 (LQSVTNSPQT…TGNNASSSAT (94 aa)) are disordered. Over residues 30-43 (QSVTNSPQTTTNTP) the composition is skewed to low complexity. The span at 64 to 88 (SDSTPNIDEIITSTGSNALTKTNSD) shows a compositional bias: polar residues. The segment covering 89-122 (SANGTPNGNSSSTSAISNASNPATTGNNASSSAT) has biased composition (low complexity). Phosphoserine is present on Ser-151. A disordered region spans residues 230–333 (LTQGRRKGNS…SNPGTNMLFD (104 aa)). Positions 238–252 (NSLNTSTKGSPSDLQ) are enriched in polar residues. Residues 253–279 (GINNGNNNGNNGNIGNGSNIKNYGNKN) are compositionally biased toward low complexity. Positions 281–288 (PNNRTKKR) match the Nuclear localization signal motif. Residues 295 to 304 (NAKNGKNNKN) are compositionally biased toward low complexity. Positions 312-328 (ITDTSAFSNTTISNPGT) are enriched in polar residues. A phosphoserine mark is found at Ser-406 and Ser-409. A leucine-zipper region spans residues 497 to 534 (IVQLERELELQRQETQWLRKMLIEDMGCVRSMLRDLQR).

As to quaternary structure, homodimer via the leucine-zipper domain. Forms a complex with a GCR1 homodimer.

The protein localises to the nucleus. Its function is as follows. Transcriptional activator required for the expression of glycolytic genes. Enhances the CT box-dependent transcriptional activation of a RAP1-GCR1 complex. Required for GCR1 phosphorylation. In Saccharomyces cerevisiae (strain ATCC 204508 / S288c) (Baker's yeast), this protein is Glycolytic genes transcriptional activator GCR2 (GCR2).